The primary structure comprises 340 residues: SH2 domain-containing adapter protein D (340 aa).

Disordered stretches follow at residues 1-77 (MAKW…PKHR), 94-186 (GGPG…QPWE), and 198-230 (VQFD…ERVD). Acidic residues predominate over residues 98–108 (EELEADTEYLD). The segment covering 171-186 (PQEDERPADEYDQPWE) has biased composition (basic and acidic residues). One can recognise an SH2 domain in the interval 240–335 (WFHGPLNRAD…AEHLALLYPV (96 aa)).

Tyrosine phosphorylated by ABL.

Functionally, may function as an adapter protein. In Homo sapiens (Human), this protein is SH2 domain-containing adapter protein D (SHD).